The following is a 117-amino-acid chain: uncharacterized protein (117 aa).

Residues 5 to 50 (DKIHNTNEQITALEKKKYQIETTLLEKQRDLLKLETQQNKAKLELL) adopt a coiled-coil conformation.

This is an uncharacterized protein from Bacillus pumilus (Bacillus mesentericus).